Reading from the N-terminus, the 313-residue chain is MAEASPQPGRYFCHCCSVEIVPRLPDYICPRCESGFIEELPEETRSAENGSAPSTASADQSRQQPFENVDQPLFTLPQGYGHFAFGIFDDSFEIPTFPPGAQADDSRDPESRREREQHSRHRYGARQPRARLTARRATGRHEGVPTLEGIIQQLVNGIITPATIPNLGLGPWGVLHSNPMDYAWGANGLDAIITQLLNQFENTGPPPADKEKIQALPTVPVTEEHVGSGLECPVCKDDYGLGEHVRQLPCNHLFHDGCIVPWLEQHDSCPVCRKSLTGQNTATDPPGLAGVSFSSSSSSSSSSPGNENPASSS.

A2 carries the post-translational modification N-acetylalanine. Phosphoserine is present on S5. Positions 5–101 (SPQPGRYFCH…FEIPTFPPGA (97 aa)) are required for interaction with BAG6. Zn(2+) is bound by residues C13, C16, C29, and C32. The segment at 13-32 (CHCCSVEIVPRLPDYICPRC) adopts a C4-type zinc-finger fold. Disordered stretches follow at residues 42 to 64 (EETR…SRQQ) and 96 to 128 (TFPP…ARQP). Over residues 47 to 64 (AENGSAPSTASADQSRQQ) the composition is skewed to polar residues. Basic and acidic residues predominate over residues 104 to 117 (DDSRDPESRREREQ). Residues 118-128 (HSRHRYGARQP) are compositionally biased toward basic residues. The tract at residues 203 to 306 (TGPPPADKEK…SSSSSSSPGN (104 aa)) is sufficient for interaction with AICDA. Residues 232 to 273 (CPVCKDDYGLGEHVRQLPCNHLFHDGCIVPWLEQHDSCPVCR) form an RING-type zinc finger. Positions 280–313 (NTATDPPGLAGVSFSSSSSSSSSSPGNENPASSS) are disordered. A compositionally biased stretch (low complexity) spans 292 to 313 (SFSSSSSSSSSSPGNENPASSS).

Interacts with CCDC50, EGFR, FLT3 and SCAMP3. Interacts with BAG6 (via ubiquitin-like domain); required for BAG6-dependent ubiquitination of proteins mislocalized to the cytosol. Interacts with CDKN1A. Interacts with AICDA. Post-translationally, ubiquitinated. May undergo autoubiquitination.

The protein resides in the cytoplasm. Its subcellular location is the nucleus. The enzyme catalyses S-ubiquitinyl-[E2 ubiquitin-conjugating enzyme]-L-cysteine + [acceptor protein]-L-lysine = [E2 ubiquitin-conjugating enzyme]-L-cysteine + N(6)-ubiquitinyl-[acceptor protein]-L-lysine.. It participates in protein modification; protein ubiquitination. Functionally, E3 ubiquitin-protein ligase that mediates ubiquitination oF target proteins. Depending on the associated E2 ligase, mediates 'Lys-27'-, 'Lys-29'-, 'Lys-48'- and/or 'Lys-63'-linked polyubiquitination of substrates. Part of a BAG6-dependent quality control process ensuring that proteins of the secretory pathway that are mislocalized to the cytosol are degraded by the proteasome. Probably acts by providing the ubiquitin ligase activity associated with the BAG6 complex and be responsible for ubiquitination of the hydrophobic mislocalized proteins and their targeting to the proteasome. May also play a role in the endosomal recycling of IGF2R, the cation-independent mannose-6-phosphate receptor. May play a role in the endosomal sorting and degradation of several membrane receptors including EGFR, FLT3, MET and CXCR4, by mediating their ubiquitination. By ubiquitinating CDKN1A/p21 and targeting it for degradation, may also promote cell proliferation. May monoubiquitinate AICDA. Acts as a regulator of DNA repair by mediating 'Lys-27'- and 'Lys-29'-linked polyubiquitination of MRE11, thereby promoting the exonuclease activity of MRE11. This is E3 ubiquitin-protein ligase RNF126 from Bos taurus (Bovine).